The primary structure comprises 443 residues: Na(+)-translocating ferredoxin:NAD(+) oxidoreductase complex subunit C (443 aa).

2 4Fe-4S ferredoxin-type domains span residues 359–391 (ESAKIATPSNCIHCGKCVGVCPIHLQPLNIAEY) and 398–428 (DKCESNNAMDCIECGSCSYICPAKRTLVSSI). [4Fe-4S] cluster-binding residues include C369, C372, C375, C379, C408, C411, C414, and C418.

Belongs to the 4Fe4S bacterial-type ferredoxin family. RnfC subfamily. In terms of assembly, the complex is composed of six subunits: RnfA, RnfB, RnfC, RnfD, RnfE and RnfG. Requires [4Fe-4S] cluster as cofactor.

The protein resides in the cell membrane. It carries out the reaction 2 reduced [2Fe-2S]-[ferredoxin] + Na(+)(in) + NAD(+) + H(+) = 2 oxidized [2Fe-2S]-[ferredoxin] + Na(+)(out) + NADH. In terms of biological role, part of a membrane-bound complex that couples electron transfer with translocation of ions across the membrane. Couples electron transfer from reduced ferredoxin to NAD(+) with electrogenic movement of Na(+) out of the cell. Involved in caffeate respiration. This Acetobacterium woodii (strain ATCC 29683 / DSM 1030 / JCM 2381 / KCTC 1655 / WB1) protein is Na(+)-translocating ferredoxin:NAD(+) oxidoreductase complex subunit C.